The chain runs to 175 residues: tRNA (cytidine(56)-2'-O)-methyltransferase (175 aa).

Leu-83 provides a ligand contact to S-adenosyl-L-methionine.

It belongs to the aTrm56 family. In terms of assembly, homodimer.

It localises to the cytoplasm. The catalysed reaction is cytidine(56) in tRNA + S-adenosyl-L-methionine = 2'-O-methylcytidine(56) in tRNA + S-adenosyl-L-homocysteine + H(+). Specifically catalyzes the AdoMet-dependent 2'-O-ribose methylation of cytidine at position 56 in tRNAs. The chain is tRNA (cytidine(56)-2'-O)-methyltransferase from Methanosphaera stadtmanae (strain ATCC 43021 / DSM 3091 / JCM 11832 / MCB-3).